The sequence spans 289 residues: Glycerol facilitator-aquaporin gla (289 aa).

2 consecutive transmembrane segments (helical) span residues 10 to 30 (ITEF…VANV) and 41 to 61 (SWMI…VAFG). The NPA 1 motif lies at 68–70 (NPA). 3 helical membrane passes run 87–107 (AQYI…IVMV), 151–171 (FVGS…FFGS), and 209–229 (MVAH…LGGP). An NPA 2 motif is present at residues 235–237 (NPA). A helical transmembrane segment spans residues 264 to 284 (WYAWVPVLAPILASLAAVALF).

This sequence belongs to the MIP/aquaporin (TC 1.A.8) family.

It is found in the cell membrane. In terms of biological role, mixed channel protein that transports both water and glycerol. This Lactococcus lactis subsp. lactis (strain IL1403) (Streptococcus lactis) protein is Glycerol facilitator-aquaporin gla (gla).